The sequence spans 482 residues: PAN domain-containing protein At5g03700 (482 aa).

The first 31 residues, 1–31 (MEGLCLNSFTRVLLLLFVFLVFSHKWQRVNA), serve as a signal peptide directing secretion. In terms of domain architecture, PAN spans 330–411 (CDKTTEFKVV…SKLGYFKVRE (82 aa)). 2 disulfides stabilise this stretch: C363–C385 and C367–C373. Residues 425–445 (GMSLLAVIALVLMVAMVYVGF) form a helical membrane-spanning segment.

It is found in the membrane. This Arabidopsis thaliana (Mouse-ear cress) protein is PAN domain-containing protein At5g03700.